The chain runs to 287 residues: Phosphatidylglycerol--prolipoprotein diacylglyceryl transferase (287 aa).

The next 4 membrane-spanning stretches (helical) occupy residues V26 to A46, F71 to Y91, I106 to V126, and G132 to F152. An a 1,2-diacyl-sn-glycero-3-phospho-(1'-sn-glycerol)-binding site is contributed by R154. Helical transmembrane passes span S187–A207, G217–F237, and W251–W271.

It belongs to the Lgt family.

It is found in the cell inner membrane. It carries out the reaction L-cysteinyl-[prolipoprotein] + a 1,2-diacyl-sn-glycero-3-phospho-(1'-sn-glycerol) = an S-1,2-diacyl-sn-glyceryl-L-cysteinyl-[prolipoprotein] + sn-glycerol 1-phosphate + H(+). It functions in the pathway protein modification; lipoprotein biosynthesis (diacylglyceryl transfer). Catalyzes the transfer of the diacylglyceryl group from phosphatidylglycerol to the sulfhydryl group of the N-terminal cysteine of a prolipoprotein, the first step in the formation of mature lipoproteins. This chain is Phosphatidylglycerol--prolipoprotein diacylglyceryl transferase, found in Allorhizobium ampelinum (strain ATCC BAA-846 / DSM 112012 / S4) (Agrobacterium vitis (strain S4)).